The primary structure comprises 74 residues: Small ribosomal subunit protein uS15 (74 aa).

Belongs to the universal ribosomal protein uS15 family. In terms of assembly, part of the 30S ribosomal subunit. Forms a bridge to the 50S subunit in the 70S ribosome, contacting the 23S rRNA.

In terms of biological role, one of the primary rRNA binding proteins, it binds directly to 16S rRNA where it helps nucleate assembly of the platform of the 30S subunit by binding and bridging several RNA helices of the 16S rRNA. Its function is as follows. Forms an intersubunit bridge (bridge B4) with the 23S rRNA of the 50S subunit in the ribosome. This is Small ribosomal subunit protein uS15 from Onion yellows phytoplasma (strain OY-M).